The following is a 675-amino-acid chain: DNA ligase (675 aa).

NAD(+) contacts are provided by residues 35–39 (DEAYD), 84–85 (SL), and glutamate 116. The N6-AMP-lysine intermediate role is filled by lysine 118. Positions 139, 180, 296, and 320 each coordinate NAD(+). Residues cysteine 414, cysteine 417, cysteine 432, and cysteine 437 each contribute to the Zn(2+) site. In terms of domain architecture, BRCT spans 597–675 (PVDAFWNGKT…EREFLERLGM (79 aa)).

Belongs to the NAD-dependent DNA ligase family. LigA subfamily. The cofactor is Mg(2+). It depends on Mn(2+) as a cofactor.

The enzyme catalyses NAD(+) + (deoxyribonucleotide)n-3'-hydroxyl + 5'-phospho-(deoxyribonucleotide)m = (deoxyribonucleotide)n+m + AMP + beta-nicotinamide D-nucleotide.. DNA ligase that catalyzes the formation of phosphodiester linkages between 5'-phosphoryl and 3'-hydroxyl groups in double-stranded DNA using NAD as a coenzyme and as the energy source for the reaction. It is essential for DNA replication and repair of damaged DNA. The sequence is that of DNA ligase from Syntrophobacter fumaroxidans (strain DSM 10017 / MPOB).